Reading from the N-terminus, the 431-residue chain is Protoheme IX farnesyltransferase, mitochondrial (431 aa).

The N-terminal 33 residues, 1 to 33, are a transit peptide targeting the mitochondrion; it reads MWRRSVVYRFSSRISVSSSLPNPRLIPWSRELC. 9 consecutive transmembrane segments (helical) span residues 109–129, 131–153, 174–194, 200–220, 226–246, 255–275, 298–317, 322–344, and 356–376; these read LVVA…AISF, GLCY…NQIF, ISVP…ACLL, MLAA…YTPL, INTW…WAAA, MILP…LAHL, IAAV…FIAY, TSSW…AFSF, and MFHA…LHRV.

This sequence belongs to the ubiA prenyltransferase (TC 3.D.4.8) family.

Its subcellular location is the mitochondrion inner membrane. The catalysed reaction is heme b + (2E,6E)-farnesyl diphosphate + H2O = Fe(II)-heme o + diphosphate. Converts protoheme IX and farnesyl diphosphate to heme O. This chain is Protoheme IX farnesyltransferase, mitochondrial (COX10), found in Arabidopsis thaliana (Mouse-ear cress).